Reading from the N-terminus, the 338-residue chain is DNA-directed RNA polymerase subunit alpha (338 aa).

An alpha N-terminal domain (alpha-NTD) region spans residues 1–225 (MLISQRPTLT…ELFGLARELN (225 aa)). The tract at residues 242 to 338 (YIAAYSMPIE…YIDVEPEDAE (97 aa)) is alpha C-terminal domain (alpha-CTD). The segment at 314–338 (FDPSTLEGYDAETGGYIDVEPEDAE) is disordered.

It belongs to the RNA polymerase alpha chain family. In terms of assembly, homodimer. The RNAP catalytic core consists of 2 alpha, 1 beta, 1 beta' and 1 omega subunit. When a sigma factor is associated with the core the holoenzyme is formed, which can initiate transcription.

It carries out the reaction RNA(n) + a ribonucleoside 5'-triphosphate = RNA(n+1) + diphosphate. DNA-dependent RNA polymerase catalyzes the transcription of DNA into RNA using the four ribonucleoside triphosphates as substrates. This chain is DNA-directed RNA polymerase subunit alpha, found in Corynebacterium efficiens (strain DSM 44549 / YS-314 / AJ 12310 / JCM 11189 / NBRC 100395).